The following is a 286-amino-acid chain: uncharacterized protein (286 aa).

The protein belongs to the chlamydial CPn_0389/CT_041/TC_0311 family.

This is an uncharacterized protein from Chlamydia muridarum (strain MoPn / Nigg).